A 188-amino-acid chain; its full sequence is MSLISRLRAVVAGDDYLDGELDDFAYEDEQQDQDQRATQADGGALATLGDSNPFDLGGDLPGSNVIGMPGISTAAAEVNLMEPRSFDEMPRAIQALRERKTVILNLTMMEPDQAQRAVDFVAGGTFAIDGHQERVGESIFLFAPSCVTVTNASQDETSAPTVVSREIDVAEPSESASAPSPAWGAAAL.

Residues 29-53 (EQQDQDQRATQADGGALATLGDSNP) are disordered.

Belongs to the SepF family. Homodimer. Interacts with FtsZ.

Its subcellular location is the cytoplasm. Functionally, cell division protein that is part of the divisome complex and is recruited early to the Z-ring. Probably stimulates Z-ring formation, perhaps through the cross-linking of FtsZ protofilaments. Its function overlaps with FtsA. This chain is Cell division protein SepF, found in Synechococcus sp. (strain CC9902).